A 494-amino-acid polypeptide reads, in one-letter code: ATP synthase subunit beta (494 aa).

Position 177–184 (177–184 (GGAGVGKT)) interacts with ATP.

This sequence belongs to the ATPase alpha/beta chains family. F-type ATPases have 2 components, CF(1) - the catalytic core - and CF(0) - the membrane proton channel. CF(1) has five subunits: alpha(3), beta(3), gamma(1), delta(1), epsilon(1). CF(0) has three main subunits: a(1), b(2) and c(9-12). The alpha and beta chains form an alternating ring which encloses part of the gamma chain. CF(1) is attached to CF(0) by a central stalk formed by the gamma and epsilon chains, while a peripheral stalk is formed by the delta and b chains.

It localises to the cell membrane. It catalyses the reaction ATP + H2O + 4 H(+)(in) = ADP + phosphate + 5 H(+)(out). Produces ATP from ADP in the presence of a proton gradient across the membrane. The catalytic sites are hosted primarily by the beta subunits. The polypeptide is ATP synthase subunit beta (Bifidobacterium adolescentis (strain ATCC 15703 / DSM 20083 / NCTC 11814 / E194a)).